Consider the following 413-residue polypeptide: Tryptophan synthase beta chain 2 (413 aa).

Lys107 is modified (N6-(pyridoxal phosphate)lysine).

Belongs to the TrpB family. As to quaternary structure, tetramer of two alpha and two beta chains. Pyridoxal 5'-phosphate serves as cofactor.

It catalyses the reaction (1S,2R)-1-C-(indol-3-yl)glycerol 3-phosphate + L-serine = D-glyceraldehyde 3-phosphate + L-tryptophan + H2O. The protein operates within amino-acid biosynthesis; L-tryptophan biosynthesis; L-tryptophan from chorismate: step 5/5. Its function is as follows. The beta subunit is responsible for the synthesis of L-tryptophan from indole and L-serine. In Nostoc sp. (strain PCC 7120 / SAG 25.82 / UTEX 2576), this protein is Tryptophan synthase beta chain 2 (trpB2).